We begin with the raw amino-acid sequence, 359 residues long: Homeotic protein knotted-1 (359 aa).

2 disordered regions span residues 1-34 (MEEITQHFGVGASSHGHGHGQHHHHHHHHHPWAS) and 213-232 (LSSGSSEEDQEGSGGETELP). Residues 16-31 (GHGHGQHHHHHHHHHP) are compositionally biased toward basic residues. In terms of domain architecture, ELK spans 242-262 (ELKHHLLKKYSGYLSSLKQEL). The segment at residues 263–326 (SKKKKKGKLP…NQRKRHWKPS (64 aa)) is a DNA-binding region (homeobox; TALE-type).

The protein belongs to the TALE/KNOX homeobox family. Forms homodimers. Binds to MBP2C; this interaction reduces RNA binding capacity. As to expression, expressed in apical meristems of vegetative and floral stems as well as in the underlying ground meristem. Specifically expressed in vascular bundles developing both in the leaf and stem. Very low levels of expression in leaves.

It localises to the nucleus. The protein resides in the cell junction. The protein localises to the plasmodesma. Its subcellular location is the cytoplasm. Binds to RNA. Possible transcription factor that regulates genes involved in development. Mutations in KN-1 alter leaf development. Foci of cells along the lateral vein do not differentiate properly but continue to divide, forming knots. May participate in the switch from indeterminate to determinate cell fates. Probably binds to the DNA sequence 5'-TGAC-3'. In Zea mays (Maize), this protein is Homeotic protein knotted-1 (KN-1).